Consider the following 155-residue polypeptide: Egg-lysin (155 aa).

A signal peptide spans 1-18; that stretch reads MKLLVLCLFAMMATLAVS.

Monomer. Homodimer. Molecules associate into dimers and then rapidly dissociate again. Interacts (as a monomer) with the egg vitelline layer protein VERL (via VERL repeats); each VERL chain can bind multiple copies of lysin. Sperm (at protein level).

The protein resides in the cytoplasmic vesicle. Its subcellular location is the secretory vesicle. It localises to the acrosome lumen. Creates a 3 um hole in the egg vitelline layer through which the sperm passes. Does not have enzyme activity. Species-specific interaction between the sperm protein lysin and the egg protein VERL exposes a basic surface on lysin that may dissociate the egg vitelline layer via electrostatic repulsion. Plays a role in ensuring species-specific fertilization. This Haliotis corrugata (Pink abalone) protein is Egg-lysin.